The following is a 392-amino-acid chain: MIGPSSQISKILLTLLFLLIIFYVFMDVELYLRIHNYAIERNYHTNVSLPASVVGPSTSESGSGSIGGSSSSSSSSSSSTSTKLPTAGDRQPSYEDHTWISCDINPLCHVTVKAILLDHTNHYLFAPLATMFDNVIGFSRSTFITPNMISFFHVGVACLAGKLVASDSLGYRRLGVLLFQIRTFLDDLDGHVARVRKHIRGERSEIGTSGYYVDGLCDGLGCIALLLGIFFYLKNNPPRRGYSIIPMSDSKLPEPTMMIPKMKATTRKVAKNVISFTGQLLLSSTAWNRYIAVYQNMLEREDVSGNQSHCQDYVFKSTWFFCVAWMWRIVNVHALLHCVLLSIFCDKLWDFLRAIRYSGYIILLVAICLTEMHILEAQNYIFNSTACSNISL.

At Met1–Lys10 the chain is on the lumenal side. A helical membrane pass occupies residues Ile11 to Tyr31. Over Leu32–Arg140 the chain is Cytoplasmic. The segment covering Ser59–Thr82 has biased composition (low complexity). The tract at residues Ser59 to Gln91 is disordered. A helical transmembrane segment spans residues Ser141–Gly161. At Lys162–Tyr212 the chain is on the lumenal side. The helical transmembrane segment at Val213 to Leu233 threads the bilayer. The Cytoplasmic portion of the chain corresponds to Lys234–Lys271. The helical transmembrane segment at Asn272–Asn288 threads the bilayer. Over Arg289–Trp319 the chain is Lumenal. Residues Phe320–Leu340 traverse the membrane as a helical segment. The Cytoplasmic segment spans residues Leu341–Arg356. Residues Tyr357–Ala377 traverse the membrane as a helical segment. At Gln378–Leu392 the chain is on the lumenal side.

Belongs to the CDP-alcohol phosphatidyltransferase class-I family. The cofactor is Mn(2+).

Its subcellular location is the membrane. The protein localises to the golgi apparatus membrane. It is found in the cell membrane. The catalysed reaction is CDP-ethanolamine + an N-acylsphing-4-enine = an N-acylsphing-4-enine 1-phosphoethanolamine + CMP + H(+). It carries out the reaction CDP-ethanolamine + an N-acyl-sphingoid base = an N-acyl-sphingoid 1-phosphoethanolamine + CMP + H(+). In terms of biological role, catalyzes the biosynthesis of ceramide phosphoethanolamine (CPE) through the transfer of a phosphatidyl head group from cytidine 5'-diphosphate (CDP)-ethanolamine on to the primary hydroxyl of ceramide. This chain is Ceramide phosphoethanolamine synthase, found in Drosophila melanogaster (Fruit fly).